The chain runs to 458 residues: UDP-N-acetylmuramoylalanine--D-glutamate ligase (458 aa).

124-130 (GSDGKTT) contacts ATP.

This sequence belongs to the MurCDEF family.

Its subcellular location is the cytoplasm. It catalyses the reaction UDP-N-acetyl-alpha-D-muramoyl-L-alanine + D-glutamate + ATP = UDP-N-acetyl-alpha-D-muramoyl-L-alanyl-D-glutamate + ADP + phosphate + H(+). It functions in the pathway cell wall biogenesis; peptidoglycan biosynthesis. Its function is as follows. Cell wall formation. Catalyzes the addition of glutamate to the nucleotide precursor UDP-N-acetylmuramoyl-L-alanine (UMA). This Clostridium botulinum (strain Langeland / NCTC 10281 / Type F) protein is UDP-N-acetylmuramoylalanine--D-glutamate ligase.